A 363-amino-acid polypeptide reads, in one-letter code: MTSEEIHAAGLCSVVPTIFQNCDNDWISKNGTCYQDSCCMSLETATSWYYRLAQFSHVVFSFMGLIIVVVYILRYRSRHILPENVRVLVDFMLLFIVAHSIDMIVLHIYHIIQSFQANISDPCFVREKVSFCAPFRYTFSFCSMGLAICTYCIYIDRLACAYYKNYTKHQRLILAAQICQLIVISSLIIIWVYRNEEPNTYLLSCLNVPVASVEDMAKATIAVFPINFICFFLSIGLFRHFKKKEEGSRFDIVRHFTASVDVESSEFLFRTTGTQAALMALFSVASLLMRLVYNFLPRQVGLTIATLSYIMSIYCFTVPLVIVKCVQKTSALRKSRISSHVGLKAMGVEGASNYFEMMKSQWE.

7 consecutive transmembrane segments (helical) span residues 52–72, 92–112, 135–155, 172–192, 218–238, 276–296, and 303–323; these read LAQFSHVVFSFMGLIIVVVYI, MLLFIVAHSIDMIVLHIYHII, FRYTFSFCSMGLAICTYCIYI, LILAAQICQLIVISSLIIIWV, KATIAVFPINFICFFLSIGLF, AALMALFSVASLLMRLVYNFL, and TIATLSYIMSIYCFTVPLVIV.

It belongs to the nematode receptor-like protein srb family.

Its subcellular location is the membrane. The sequence is that of Serpentine receptor class beta-18 (srb-18) from Caenorhabditis elegans.